Here is a 134-residue protein sequence, read N- to C-terminus: DNA-binding protein H-NS (134 aa).

Residues 111–116 (QGRTLA) mediate DNA binding.

It belongs to the histone-like protein H-NS family. Homodimer that oligomerizes on DNA into higher-order complexes that form bridges between disparate regions of DNA compacting it. Interacts with YmoA and other similar proteins.

Its subcellular location is the cytoplasm. The protein resides in the nucleoid. In terms of biological role, a DNA-binding protein implicated in transcriptional repression and chromosome organization and compaction. Binds nucleation sites in AT-rich DNA and bridges them, forming higher-order nucleoprotein complexes and condensing the chromosome. As many horizontally transferred genes are AT-rich, it plays a central role in silencing foreign genes. A subset of genes are repressed by H-NS in association with other proteins. In Proteus vulgaris, this protein is DNA-binding protein H-NS (hns).